A 139-amino-acid polypeptide reads, in one-letter code: MGGWMSCGPPIYTPHTNSWTESGWDRTSWWRWSAQRWSGWSFKIVRANKALRVMAKTKMPLVLIPPSPNKPYSKLAINQELHLIPPKKTSPATSSSLKPPRRPRGCLNGRLSWRCPTLSRKVRVPTIKVPMVRAPSTPP.

Residues 83 to 109 (LIPPKKTSPATSSSLKPPRRPRGCLNG) form a disordered region. Low complexity predominate over residues 86–98 (PKKTSPATSSSLK).

It to M.pneumoniae MPN_091 and MPN_463.

This is an uncharacterized protein from Mycoplasma pneumoniae (strain ATCC 29342 / M129 / Subtype 1) (Mycoplasmoides pneumoniae).